A 136-amino-acid chain; its full sequence is ATP synthase epsilon chain (136 aa).

It belongs to the ATPase epsilon chain family. In terms of assembly, F-type ATPases have 2 components, CF(1) - the catalytic core - and CF(0) - the membrane proton channel. CF(1) has five subunits: alpha(3), beta(3), gamma(1), delta(1), epsilon(1). CF(0) has three main subunits: a, b and c.

The protein localises to the cellular thylakoid membrane. Functionally, produces ATP from ADP in the presence of a proton gradient across the membrane. The polypeptide is ATP synthase epsilon chain (atpC) (Prochloron didemni).